Reading from the N-terminus, the 348-residue chain is 3-isopropylmalate dehydrogenase (348 aa).

76–87 (GPKWTDPNNRPE) lines the NAD(+) pocket. Substrate is bound by residues Arg94, Arg104, Arg132, and Asp217. Positions 217, 241, and 245 each coordinate Mg(2+). 275–287 (GSAPDIAGKNVAN) serves as a coordination point for NAD(+).

It belongs to the isocitrate and isopropylmalate dehydrogenases family. LeuB type 1 subfamily. In terms of assembly, homodimer. Requires Mg(2+) as cofactor. The cofactor is Mn(2+).

It is found in the cytoplasm. It catalyses the reaction (2R,3S)-3-isopropylmalate + NAD(+) = 4-methyl-2-oxopentanoate + CO2 + NADH. It participates in amino-acid biosynthesis; L-leucine biosynthesis; L-leucine from 3-methyl-2-oxobutanoate: step 3/4. Catalyzes the oxidation of 3-carboxy-2-hydroxy-4-methylpentanoate (3-isopropylmalate) to 3-carboxy-4-methyl-2-oxopentanoate. The product decarboxylates to 4-methyl-2 oxopentanoate. In Staphylococcus aureus (strain MW2), this protein is 3-isopropylmalate dehydrogenase.